The primary structure comprises 241 residues: Phycocyanobilin:ferredoxin oxidoreductase (241 aa).

It belongs to the HY2 family.

The catalysed reaction is (2R,3Z)-phycocyanobilin + 4 oxidized [2Fe-2S]-[ferredoxin] = biliverdin IXalpha + 4 reduced [2Fe-2S]-[ferredoxin] + 4 H(+). Its function is as follows. Catalyzes the four-electron reduction of biliverdin IX-alpha (2-electron reduction at both the A and D rings); the reaction proceeds via an isolatable 2-electron intermediate, 181,182-dihydrobiliverdin. This chain is Phycocyanobilin:ferredoxin oxidoreductase, found in Prochlorococcus marinus (strain MIT 9515).